The chain runs to 288 residues: Adenylate kinase (288 aa).

65–70 (GVGKGT) serves as a coordination point for ATP. Residues 85–114 (ATGDLVRDELKSSGPLSKQLAEIVNQGKLV) are NMP. Residues Thr86, Arg91, 112-114 (KLV), 142-145 (GFPR), and Gln149 each bind AMP. The segment at 178–226 (GRRICSECGKNFNVASIDVAGENGAPRISMARLNPPFTVCFKLITRADD) is LID. Arg179 serves as a coordination point for ATP. Residues Arg223 and Arg234 each contribute to the AMP site. Gly262 is a binding site for ATP.

It belongs to the adenylate kinase family. Monomer.

The protein localises to the cytoplasm. It carries out the reaction AMP + ATP = 2 ADP. In terms of biological role, catalyzes the reversible transfer of the terminal phosphate group between ATP and AMP. Plays an important role in cellular energy homeostasis and in adenine nucleotide metabolism. This is Adenylate kinase (ADK) from Solanum tuberosum (Potato).